A 116-amino-acid polypeptide reads, in one-letter code: Ribosome-binding factor A (116 aa).

This sequence belongs to the RbfA family. As to quaternary structure, monomer. Binds 30S ribosomal subunits, but not 50S ribosomal subunits or 70S ribosomes.

It is found in the cytoplasm. One of several proteins that assist in the late maturation steps of the functional core of the 30S ribosomal subunit. Associates with free 30S ribosomal subunits (but not with 30S subunits that are part of 70S ribosomes or polysomes). Required for efficient processing of 16S rRNA. May interact with the 5'-terminal helix region of 16S rRNA. The sequence is that of Ribosome-binding factor A from Clostridium perfringens (strain 13 / Type A).